The sequence spans 438 residues: Probable phosphoglucosamine mutase (438 aa).

The Phosphoserine intermediate role is filled by Ser91. The Mg(2+) site is built by Ser91, Asp228, Asp230, and Asp232. Position 91 is a phosphoserine (Ser91).

It belongs to the phosphohexose mutase family. Mg(2+) serves as cofactor. In terms of processing, activated by phosphorylation.

It catalyses the reaction alpha-D-glucosamine 1-phosphate = D-glucosamine 6-phosphate. Functionally, catalyzes the conversion of glucosamine-6-phosphate to glucosamine-1-phosphate. This Methanocella arvoryzae (strain DSM 22066 / NBRC 105507 / MRE50) protein is Probable phosphoglucosamine mutase.